A 209-amino-acid polypeptide reads, in one-letter code: Uracil phosphoribosyltransferase (209 aa).

Residues Arg79, Arg104, and Asp131 to Ser139 each bind 5-phospho-alpha-D-ribose 1-diphosphate. Uracil contacts are provided by residues Ile194 and Gly199–Ala201. Residue Asp200 coordinates 5-phospho-alpha-D-ribose 1-diphosphate.

The protein belongs to the UPRTase family. Requires Mg(2+) as cofactor.

The catalysed reaction is UMP + diphosphate = 5-phospho-alpha-D-ribose 1-diphosphate + uracil. It functions in the pathway pyrimidine metabolism; UMP biosynthesis via salvage pathway; UMP from uracil: step 1/1. Allosterically activated by GTP. In terms of biological role, catalyzes the conversion of uracil and 5-phospho-alpha-D-ribose 1-diphosphate (PRPP) to UMP and diphosphate. The sequence is that of Uracil phosphoribosyltransferase from Desulfitobacterium hafniense (strain DSM 10664 / DCB-2).